The sequence spans 504 residues: Kinesin light chain 3 (504 aa).

Positions 90 to 150 (ALSAHVGALE…EEEKRHLEFL (61 aa)) form a coiled coil. The interval 153–197 (LRQYDPPAESQQSESPPRRDSLASLFPSEEEERKGPEAAGAAAAQ) is disordered. The span at 158 to 167 (PPAESQQSES) shows a compositional bias: low complexity. Phosphoserine is present on Ser173. 5 TPR repeats span residues 207-240 (LRTLHNLVIQYAGQGRYEVAVPLCRQALEDLERS), 249-282 (ATMLNILALVYRDQNKYKEATDLLHDALQIREQT), 291-324 (AATLNNLAVLYGKRGRYREAEPLCQRALEIREKV), 333-366 (AKQLNNLALLCQNQGKFEDVERHYARALSIYEAL), and 375-408 (AKTKNNLASAYLKQNKYQQAEELYKEILHKEDLP). Residues 411–438 (LGAPNTGTAGDAEQALRRSSSLSKIRES) are disordered. Ser466 bears the Phosphoserine mark. Thr498 is modified (phosphothreonine). Ser502 is subject to Phosphoserine.

It belongs to the kinesin light chain family. Oligomer composed of two heavy chains and two light chains. Associates with microtubulin in an ATP-dependent manner. Interacts with KIF5C. Interacts with ODF1. Interacts with LRGUK. Interacts with VDAC2.

It localises to the cytoplasm. The protein localises to the cytoskeleton. Its subcellular location is the mitochondrion. Kinesin is a microtubule-associated force-producing protein that may play a role in organelle transport. Plays a role during spermiogenesis in the development of the sperm tail midpiece and in the normal function of spermatozoa. May play a role in the formation of the mitochondrial sheath formation in the developing spermatid midpiece. The chain is Kinesin light chain 3 (KLC3) from Pongo abelii (Sumatran orangutan).